The primary structure comprises 335 residues: Transaldolase (335 aa).

Ser2 is modified (N-acetylserine). Catalysis depends on Lys144, which acts as the Schiff-base intermediate with substrate.

Belongs to the transaldolase family. Type 1 subfamily. In terms of assembly, homodimer.

It catalyses the reaction D-sedoheptulose 7-phosphate + D-glyceraldehyde 3-phosphate = D-erythrose 4-phosphate + beta-D-fructose 6-phosphate. The protein operates within carbohydrate degradation; pentose phosphate pathway; D-glyceraldehyde 3-phosphate and beta-D-fructose 6-phosphate from D-ribose 5-phosphate and D-xylulose 5-phosphate (non-oxidative stage): step 2/3. In terms of biological role, transaldolase is important for the balance of metabolites in the pentose-phosphate pathway. This chain is Transaldolase (TAL1), found in Saccharomyces cerevisiae (strain ATCC 204508 / S288c) (Baker's yeast).